Reading from the N-terminus, the 525-residue chain is D-arabinono-1,4-lactone oxidase (525 aa).

The region spanning Tyr23 to Glu197 is the FAD-binding PCMH-type domain. His60 is modified (pros-8alpha-FAD histidine).

Belongs to the oxygen-dependent FAD-linked oxidoreductase family. Requires FAD as cofactor.

The protein resides in the mitochondrion membrane. It carries out the reaction D-arabinono-1,4-lactone + O2 = dehydro-D-arabinono-1,4-lactone + H2O2 + H(+). It functions in the pathway cofactor biosynthesis; D-erythroascorbate biosynthesis; dehydro-D-arabinono-1,4-lactone from D-arabinose: step 2/2. This is D-arabinono-1,4-lactone oxidase (ALO1) from Kluyveromyces lactis (strain ATCC 8585 / CBS 2359 / DSM 70799 / NBRC 1267 / NRRL Y-1140 / WM37) (Yeast).